Consider the following 355-residue polypeptide: Electron transfer flavoprotein subunit alpha, mitochondrial (355 aa).

An FAD-binding site is contributed by 295–323; that stretch reads LYIAVGISGAIQHLAGMKDSKVIVAINKD.

The protein belongs to the ETF alpha-subunit/FixB family. As to quaternary structure, heterodimer of an alpha and a beta subunit. Requires FAD as cofactor.

The protein localises to the mitochondrion matrix. Its function is as follows. The electron transfer flavoprotein serves as a specific electron acceptor for several dehydrogenases, including five acyl-CoA dehydrogenases, glutaryl-CoA and sarcosine dehydrogenase. It transfers the electrons to the main mitochondrial respiratory chain via ETF-ubiquinone oxidoreductase (ETF dehydrogenase). This chain is Electron transfer flavoprotein subunit alpha, mitochondrial (etfa), found in Dictyostelium discoideum (Social amoeba).